The following is a 173-amino-acid chain: Placenta-specific protein 1 (173 aa).

Residues 1–23 (MKLIKFLGGVVFFTLMFSGYSEQ) form the signal peptide.

The protein belongs to the PLAC1 family.

It is found in the secreted. Functionally, may play a role in placental development. The protein is Placenta-specific protein 1 of Rattus norvegicus (Rat).